A 324-amino-acid polypeptide reads, in one-letter code: MLALGIEGTAHTLGIGIVSEKKVLANVFDTLTTEKGGIHPKEAAEHHARLMKPLLKKALEKAGISMDDIDVIAFSQGPGLGPALRVVATAARALAIRYNKPIVGVNHCIAHVEITKMFGIKDPVGLYVSGGNTQVLALEGGRYRVFGETLDIGIGNAIDVFARELGLGFPGGPKLEKLAEKGKNYIDLPYAVKGMDLSFSGLLTEAIRKYRSGKFRVEDLAYSFQETAFAALVEVTERALAHTEKKEVVLVGGVAANNRLREMLKIMAEDRGVKFFVPPYDLCRDNGAMIAYTGLRMYKAGISFPLEKTIVKQKFRTDEVEITW.

Fe cation is bound by residues His107, His111, and Tyr127. Substrate is bound by residues 127 to 131 (YVSGG), Asp159, Gly172, Glu176, and Asn257. Asp285 is a binding site for Fe cation.

This sequence belongs to the KAE1 / TsaD family. As to quaternary structure, monomer. Component of the KEOPS complex that consists of Kae1, Bud32, Cgi121 and Pcc1; the whole complex dimerizes. The cofactor is Fe(2+).

It is found in the cytoplasm. It carries out the reaction L-threonylcarbamoyladenylate + adenosine(37) in tRNA = N(6)-L-threonylcarbamoyladenosine(37) in tRNA + AMP + H(+). Its function is as follows. Required for the formation of a threonylcarbamoyl group on adenosine at position 37 (t(6)A37) in tRNAs that read codons beginning with adenine. Is a component of the KEOPS complex that is probably involved in the transfer of the threonylcarbamoyl moiety of threonylcarbamoyl-AMP (TC-AMP) to the N6 group of A37. Kae1 likely plays a direct catalytic role in this reaction, but requires other protein(s) of the complex to fulfill this activity. The protein is tRNA N6-adenosine threonylcarbamoyltransferase of Pyrococcus horikoshii (strain ATCC 700860 / DSM 12428 / JCM 9974 / NBRC 100139 / OT-3).